The chain runs to 353 residues: Uroporphyrinogen decarboxylase (353 aa).

Substrate-binding positions include Arg30–Arg34, Asp79, Tyr154, Ser209, and His332.

The protein belongs to the uroporphyrinogen decarboxylase family. Homodimer.

The protein localises to the cytoplasm. It catalyses the reaction uroporphyrinogen III + 4 H(+) = coproporphyrinogen III + 4 CO2. The protein operates within porphyrin-containing compound metabolism; protoporphyrin-IX biosynthesis; coproporphyrinogen-III from 5-aminolevulinate: step 4/4. Functionally, catalyzes the decarboxylation of four acetate groups of uroporphyrinogen-III to yield coproporphyrinogen-III. The sequence is that of Uroporphyrinogen decarboxylase from Mycolicibacterium smegmatis (strain ATCC 700084 / mc(2)155) (Mycobacterium smegmatis).